The sequence spans 73 residues: Large ribosomal subunit protein bL31 (73 aa).

Zn(2+) contacts are provided by cysteine 16, cysteine 18, cysteine 36, and cysteine 39.

This sequence belongs to the bacterial ribosomal protein bL31 family. Type A subfamily. Part of the 50S ribosomal subunit. Zn(2+) is required as a cofactor.

Binds the 23S rRNA. The polypeptide is Large ribosomal subunit protein bL31 (Desulfotalea psychrophila (strain LSv54 / DSM 12343)).